Consider the following 175-residue polypeptide: Ribosome maturation factor RimM (175 aa).

The 74-residue stretch at 99 to 172 (EGEFHLLDLV…WLRLTPPPGL (74 aa)) folds into the PRC barrel domain.

The protein belongs to the RimM family. In terms of assembly, binds ribosomal protein uS19.

The protein resides in the cytoplasm. Its function is as follows. An accessory protein needed during the final step in the assembly of 30S ribosomal subunit, possibly for assembly of the head region. Essential for efficient processing of 16S rRNA. May be needed both before and after RbfA during the maturation of 16S rRNA. It has affinity for free ribosomal 30S subunits but not for 70S ribosomes. This Synechococcus sp. (strain WH7803) protein is Ribosome maturation factor RimM.